The primary structure comprises 349 residues: Anthranilate phosphoribosyltransferase (349 aa).

5-phospho-alpha-D-ribose 1-diphosphate contacts are provided by residues glycine 82, 85 to 86 (GD), 92 to 95 (NVST), 110 to 118 (KHGNRAVSG), and serine 122. Anthranilate is bound at residue glycine 82. Residue serine 94 participates in Mg(2+) binding. Asparagine 113 lines the anthranilate pocket. An anthranilate-binding site is contributed by arginine 168. 2 residues coordinate Mg(2+): aspartate 227 and glutamate 228.

It belongs to the anthranilate phosphoribosyltransferase family. As to quaternary structure, homodimer. Mg(2+) is required as a cofactor.

The catalysed reaction is N-(5-phospho-beta-D-ribosyl)anthranilate + diphosphate = 5-phospho-alpha-D-ribose 1-diphosphate + anthranilate. Its pathway is amino-acid biosynthesis; L-tryptophan biosynthesis; L-tryptophan from chorismate: step 2/5. Functionally, catalyzes the transfer of the phosphoribosyl group of 5-phosphorylribose-1-pyrophosphate (PRPP) to anthranilate to yield N-(5'-phosphoribosyl)-anthranilate (PRA). The protein is Anthranilate phosphoribosyltransferase of Pseudomonas entomophila (strain L48).